We begin with the raw amino-acid sequence, 556 residues long: 2-succinyl-5-enolpyruvyl-6-hydroxy-3-cyclohexene-1-carboxylate synthase (556 aa).

This sequence belongs to the TPP enzyme family. MenD subfamily. Homodimer. It depends on Mg(2+) as a cofactor. The cofactor is Mn(2+). Thiamine diphosphate is required as a cofactor.

It catalyses the reaction isochorismate + 2-oxoglutarate + H(+) = 5-enolpyruvoyl-6-hydroxy-2-succinyl-cyclohex-3-ene-1-carboxylate + CO2. It participates in quinol/quinone metabolism; 1,4-dihydroxy-2-naphthoate biosynthesis; 1,4-dihydroxy-2-naphthoate from chorismate: step 2/7. It functions in the pathway quinol/quinone metabolism; menaquinone biosynthesis. Its function is as follows. Catalyzes the thiamine diphosphate-dependent decarboxylation of 2-oxoglutarate and the subsequent addition of the resulting succinic semialdehyde-thiamine pyrophosphate anion to isochorismate to yield 2-succinyl-5-enolpyruvyl-6-hydroxy-3-cyclohexene-1-carboxylate (SEPHCHC). This Salmonella paratyphi B (strain ATCC BAA-1250 / SPB7) protein is 2-succinyl-5-enolpyruvyl-6-hydroxy-3-cyclohexene-1-carboxylate synthase.